The primary structure comprises 445 residues: 6-phosphogluconate dehydrogenase, decarboxylating (445 aa).

NADP(+) is bound by residues 1-4, 22-24, 63-65, and asparagine 91; these read AVMG, NRS, and VKA. Residues asparagine 91 and 117–119 contribute to the substrate site; that span reads SGG. The Proton acceptor role is filled by lysine 172. 175-176 serves as a coordination point for substrate; that stretch reads HN. Glutamate 179 serves as the catalytic Proton donor. Positions 180, 249, 276, 434, and 440 each coordinate substrate.

The protein belongs to the 6-phosphogluconate dehydrogenase family. Homodimer.

It carries out the reaction 6-phospho-D-gluconate + NADP(+) = D-ribulose 5-phosphate + CO2 + NADPH. It participates in carbohydrate degradation; pentose phosphate pathway; D-ribulose 5-phosphate from D-glucose 6-phosphate (oxidative stage): step 3/3. Catalyzes the oxidative decarboxylation of 6-phosphogluconate to ribulose 5-phosphate and CO(2), with concomitant reduction of NADP to NADPH. The sequence is that of 6-phosphogluconate dehydrogenase, decarboxylating (gnd) from Citrobacter amalonaticus.